We begin with the raw amino-acid sequence, 346 residues long: Histone H1.8 (346 aa).

Low complexity-rich tracts occupy residues 1-23 (MAPGSVTSDISPSSTSTAGSSRS) and 38-48 (PGGPSHSSLPV). 2 disordered regions span residues 1–50 (MAPG…PVGR) and 121–346 (ATGS…RAEA). Residues 51 to 129 (RHPPVLRMVL…GATGSFKLVP (79 aa)) form the H15 domain. The span at 128–137 (VPKHKKKIQP) shows a compositional bias: basic residues. Over residues 148–167 (RAGEAKGKGPKKPSEAKEDP) the composition is skewed to basic and acidic residues. The Nuclear localization signal motif lies at 164-179 (KEDPPNVGKVKKAAKR). Positions 172 to 182 (KVKKAAKRPAK) are enriched in basic residues. 2 stretches are compositionally biased toward basic and acidic residues: residues 205-225 (KDTRAQSGEARKVPPKPDKAM) and 251-262 (EAYRKTKAESKS). Over residues 278 to 288 (TKKKVVAKAKA) the composition is skewed to basic residues. Low complexity predominate over residues 298–309 (KAAAPAKGSGSK). The span at 334–346 (ASSSKVSSQRAEA) shows a compositional bias: polar residues.

The protein belongs to the histone H1/H5 family. In terms of tissue distribution, oocyte-specific.

Its subcellular location is the cytoplasm. The protein resides in the nucleus. It is found in the chromosome. Its function is as follows. May play a key role in the control of gene expression during oogenesis and early embryogenesis, presumably through the perturbation of chromatin structure. Essential for meiotic maturation of germinal vesicle-stage oocytes. The somatic type linker histone H1c is rapidly replaced by H1oo in a donor nucleus transplanted into an oocyte. The greater mobility of H1oo as compared to H1c may contribute to this rapid replacement and increased instability of the embryonic chromatin structure. The rapid replacement of H1c with H1oo may play an important role in nuclear remodeling. The sequence is that of Histone H1.8 from Homo sapiens (Human).